The following is a 241-amino-acid chain: SURF1-like protein (241 aa).

2 consecutive transmembrane segments (helical) span residues 5-25 and 199-219; these read LTVLITFIILVLLGFWQLNRL and LEYAFTWFGLAASLVVIYRIY.

The protein belongs to the SURF1 family.

It localises to the cell membrane. The sequence is that of SURF1-like protein from Rickettsia bellii (strain RML369-C).